Consider the following 455-residue polypeptide: Glutamyl-tRNA reductase (455 aa).

Substrate is bound by residues 49 to 52 (TCNR), Ser-109, 114 to 116 (EAQ), and Gln-120. Cys-50 (nucleophile) is an active-site residue. Residue 190 to 195 (GAGAMG) coordinates NADP(+).

Belongs to the glutamyl-tRNA reductase family. Homodimer.

It catalyses the reaction (S)-4-amino-5-oxopentanoate + tRNA(Glu) + NADP(+) = L-glutamyl-tRNA(Glu) + NADPH + H(+). The protein operates within porphyrin-containing compound metabolism; protoporphyrin-IX biosynthesis; 5-aminolevulinate from L-glutamyl-tRNA(Glu): step 1/2. Its function is as follows. Catalyzes the NADPH-dependent reduction of glutamyl-tRNA(Glu) to glutamate 1-semialdehyde (GSA). This Salinispora tropica (strain ATCC BAA-916 / DSM 44818 / JCM 13857 / NBRC 105044 / CNB-440) protein is Glutamyl-tRNA reductase.